A 232-amino-acid chain; its full sequence is Flagellar L-ring protein (232 aa).

Residues 1–21 form the signal peptide; that stretch reads MQKYALHAYPVMALMVATLTG. Cys-22 carries the N-palmitoyl cysteine lipid modification. A lipid anchor (S-diacylglycerol cysteine) is attached at Cys-22.

This sequence belongs to the FlgH family. As to quaternary structure, the basal body constitutes a major portion of the flagellar organelle and consists of four rings (L,P,S, and M) mounted on a central rod.

The protein localises to the cell outer membrane. The protein resides in the bacterial flagellum basal body. In terms of biological role, assembles around the rod to form the L-ring and probably protects the motor/basal body from shearing forces during rotation. In Salmonella choleraesuis (strain SC-B67), this protein is Flagellar L-ring protein.